We begin with the raw amino-acid sequence, 1697 residues long: MRQIVTGVIHQTTQSQQIPNVINSNQIQFSNEPMVVGSIEDFDIDSEVPPLAINLQRSINNNNNNNNNNNNNNNNNNNNNNNNNNNNTQPCTTVFLDRDSCVNVKATIDLLKEQLEFTIKDLIDFKENYDKLESTEQFKQWSNLIKNIKENSLNNSNIYLTIPTTQNLINNNNNNNNNNNNNNNNNNNNNNNNNNNVIIPSASTENKEENDNNNSNNNNNINLSPDSSITKDINITENKITEIKTTETKETSTGTSPLEKSPSKGFIISPKKPEEENEIEGETINNIAITNYTQGPSMLTLMKKKLENIKKNNNNNNNNGNGNNNSNNNNSNSNNNNNGISPSSSPPSHLNGNNNNNNSNNTNSNNTTNATTNSVGFSITMTNSNSLSVSKRMNKFKSWTSSKPTSSSIGFASSPQNNGKPLNISGSSRFFTSRQDSKIDLLKSPSSSPPTQSDIFNENNNNNNNNNNNNNNNNNNNNNNNNNNNNNNNNEELINNNNNNNNDENYKIEETEESLKELLEKEKLENEEREKILKERNEIDNLKKKNHLSKGYFMRACNASNDDGLEEEDIPLQDEHWETNVIVLLPCRHHVKVPGSSSSSIDSIRQLAWASGKMQGHLNLEKDEKFFTLRWCNKDVVFDQDTPLGHLIQYNLNYNNPTQKPTNIKLELVLEDELCKERLVDLQSLEINNGRPSIWKSHIDDVLSFNRKLRELAMLAKPQSNVPAARLTPYPPPKTIPEFFVIRVHLFKNQTKSLRCANNHTAFSLMTILSEKLKNTTPFDPTQYRFLITGINQYVDPNVPLLSVEYIVEKIKRKGEIDLTMVELLSLGLIIQQQQQQQQQQQQQQQQQQIENIDDENILKLNNGILNVLSKIEKPIREKDNCISSLTVTENLQVRLLHAHEIFASKASEIIGTDSPSIQLFIEAAVYFGGELLATQSSKLVSFQDTVVWNEWVNIPLAVSNIPNGARMCLGLNARYRGDIFNIGWVGHRLFDSKGILNTFAPFSLLLWPGKINPIGTCVDNLESKDQAIIIAFEFKDYVVPKTIHYEDDLIELISKDENGNELPVVTMEEMDRVEQIILQDPLYSLNKEERLLIWKSRYFCHTKPQALSKLLQSVEWTNYKQVGEAFQLLKIWPTLSAVDALELLDPKFADCVEIREYAVKCLDQMSDYELEIYMLQLVQAIKHDVFHNSVLSLFLIGRVWQNMQVLGHPFFWHLRADIDNQEVCERFRVLSSGFLRYAPTQLMESFKREITTLRILENLAKRVKEVPYEKRKQYVENNLREEQSFPTELFVPFDPSIRILNIIPEKCKSMDSAKVPLWVTFKNADPFAPPLQMIAKTGDDLRQDILTLQLLRLMDHMWKSQDLDLHMTIYRCIATGMGTGLIEVVPNSETAARIQAGAGGVSGAFKQTPIANWLKNHNQTENSYQKAVSKFTLSCAGYCVATYVLGIGDRHNDNIMVDIHGHLFHIDFGHFLGNFKTFAGFQREKAPFVLTPDFVYVIGGKDSPNFAFFVDICCKAFNIIRSNAHVFINMFELMLSTGIPELRSENDIVYLRDKFRLDLTDAEASEYFKKLIHESIGTLTTTINFAIHIMAHRKNLVSGNSAPKIGSASSLNLNKNKPSSQSKLDLSRSDLSRSDSSRSDSSRLDLSRSDKKNNKDNKEKEKEKEKEKEKENNDNNDKDNNNNSNNDTEKENSIDK.

6 disordered regions span residues 57 to 91, 169 to 229, 244 to 279, 310 to 376, 398 to 428, and 440 to 504; these read RSIN…TQPC, INNN…DSSI, KTTE…ENEI, KKNN…NSVG, SWTS…SGSS, and DLLK…NNDE. 3 stretches are compositionally biased toward low complexity: residues 60-87, 170-196, and 212-222; these read NNNN…NNNN and NNNSNNNNNIN. Low complexity-rich tracts occupy residues 312 to 374 and 398 to 408; these read NNNN…TTNS and SWTSSKPTSSS. Polar residues-rich tracts occupy residues 409–428 and 444–456; these read IGFA…SGSS and SPSS…SDIF. The span at 457 to 503 shows a compositional bias: low complexity; that stretch reads NENNNNNNNNNNNNNNNNNNNNNNNNNNNNNNNNEELINNNNNNNND. Residues 737-823 enclose the PI3K-RBD domain; it reads PEFFVIRVHL…KGEIDLTMVE (87 aa). The C2 PI3K-type domain maps to 888–1036; sequence VTENLQVRLL…QAIIIAFEFK (149 aa). Residues 1060-1238 enclose the PIK helical domain; that stretch reads GNELPVVTME…RVLSSGFLRY (179 aa). The PI3K/PI4K catalytic domain maps to 1304–1581; the sequence is IPEKCKSMDS…LIHESIGTLT (278 aa). The interval 1310 to 1316 is G-loop; that stretch reads SMDSAKV. Positions 1447 to 1455 are catalytic loop; sequence GIGDRHNDN. Residues 1466–1492 form an activation loop region; that stretch reads HIDFGHFLGNFKTFAGFQREKAPFVLT. Residues 1609–1625 show a composition bias toward low complexity; it reads ASSLNLNKNKPSSQSKL. Residues 1609–1697 form a disordered region; that stretch reads ASSLNLNKNK…DTEKENSIDK (89 aa). A run of 5 repeats spans residues 1622 to 1626, 1627 to 1631, 1632 to 1636, 1642 to 1646, and 1647 to 1651. A 5 X 5 AA approximate repeats region spans residues 1622–1651; sequence QSKLDLSRSDLSRSDSSRSDSSRLDLSRSD. Composition is skewed to basic and acidic residues over residues 1626 to 1681 and 1688 to 1697; these read DLSR…DKDN and DTEKENSIDK. A 7 X 2 AA tandem repeats of K-E region spans residues 1659–1672; it reads KEKEKEKEKEKEKE.

It belongs to the PI3/PI4-kinase family.

It catalyses the reaction a 1,2-diacyl-sn-glycero-3-phospho-(1D-myo-inositol) + ATP = a 1,2-diacyl-sn-glycero-3-phospho-(1D-myo-inositol-3-phosphate) + ADP + H(+). The polypeptide is Phosphatidylinositol 3-kinase 3 (pikC) (Dictyostelium discoideum (Social amoeba)).